Here is a 252-residue protein sequence, read N- to C-terminus: MTEGARSTIDQGEVDRFSAMAAEWWSPTGKFRPLHKFNPVRLTYIRDKACENFGRDPKSARPLEGLRVLDIGCGGGLLSEPVARMGATVTGADPSEKNIGIASTHAKASGVSVDYRAVTAEELADAGETFDIVLNMEVVEHVADVEFFMTTCAKMVRPGGLIFVATINRTMKAAALAIFAAENILRWLPRGTHQYEKLVRPEELEKPLTASGLEITDRTGVFFNPLSNQWNLSKDMDVNYMLLAKRSAQLDR.

Arginine 41, glycine 72, aspartate 93, and methionine 136 together coordinate S-adenosyl-L-methionine.

Belongs to the methyltransferase superfamily. UbiG/COQ3 family.

It carries out the reaction a 3-demethylubiquinol + S-adenosyl-L-methionine = a ubiquinol + S-adenosyl-L-homocysteine + H(+). It catalyses the reaction a 3-(all-trans-polyprenyl)benzene-1,2-diol + S-adenosyl-L-methionine = a 2-methoxy-6-(all-trans-polyprenyl)phenol + S-adenosyl-L-homocysteine + H(+). It functions in the pathway cofactor biosynthesis; ubiquinone biosynthesis. In terms of biological role, O-methyltransferase that catalyzes the 2 O-methylation steps in the ubiquinone biosynthetic pathway. The chain is Ubiquinone biosynthesis O-methyltransferase from Rhizobium leguminosarum bv. trifolii (strain WSM2304).